The primary structure comprises 398 residues: Nicotinate phosphoribosyltransferase (398 aa).

Phosphohistidine; by autocatalysis is present on H214.

This sequence belongs to the NAPRTase family. Post-translationally, transiently phosphorylated on a His residue during the reaction cycle. Phosphorylation strongly increases the affinity for substrates and increases the rate of nicotinate D-ribonucleotide production. Dephosphorylation regenerates the low-affinity form of the enzyme, leading to product release.

The enzyme catalyses nicotinate + 5-phospho-alpha-D-ribose 1-diphosphate + ATP + H2O = nicotinate beta-D-ribonucleotide + ADP + phosphate + diphosphate. It participates in cofactor biosynthesis; NAD(+) biosynthesis; nicotinate D-ribonucleotide from nicotinate: step 1/1. Catalyzes the synthesis of beta-nicotinate D-ribonucleotide from nicotinate and 5-phospho-D-ribose 1-phosphate at the expense of ATP. The chain is Nicotinate phosphoribosyltransferase from Xanthomonas campestris pv. campestris (strain B100).